A 516-amino-acid chain; its full sequence is (R)-citramalate synthase CimA (516 aa).

Residues 8 to 269 (LEILDVTLRD…KTNINEIAIT (262 aa)) form the Pyruvate carboxyltransferase domain. Arg16 (proton donor) is an active-site residue. Residues 16–17 (RD) and Tyr144 each bind pyruvate. Residue Asp17 coordinates Mn(2+). Glu146 serves as the catalytic Proton acceptor. Thr179 provides a ligand contact to pyruvate. Residues His207 and His209 each contribute to the Mn(2+) site.

Belongs to the alpha-IPM synthase/homocitrate synthase family. As to quaternary structure, homodimer. The cofactor is Mn(2+).

It carries out the reaction pyruvate + acetyl-CoA + H2O = (3R)-citramalate + CoA + H(+). It functions in the pathway amino-acid biosynthesis; L-isoleucine biosynthesis; 2-oxobutanoate from pyruvate: step 1/3. Its activity is regulated as follows. Regulated by the end-product isoleucine via a feedback inhibition. The binding of isoleucine has inhibitory effects on the binding of both pyruvate and acetyl-CoA. May act via conformational change of the dimer interface of the regulatory domain, leading to inhibition of the catalytic reaction. Catalyzes the condensation of pyruvate and acetyl-coenzyme A to form (R)-citramalate. Shows strict substrate specificity for pyruvate. Cannot use alpha-ketoisovalerate, alpha-ketobutyrate, alpha-ketoisocaproate, alpha-ketoglutarate or glyoxylate. This Leptospira interrogans serogroup Icterohaemorrhagiae serovar Lai (strain 56601) protein is (R)-citramalate synthase CimA.